The following is a 688-amino-acid chain: Lipase (688 aa).

An N-terminal signal peptide occupies residues 1–35 (MKTRQNKYSIRKFSVGASSILIAALLFMGGGSAQA). The disordered stretch occupies residues 31–309 (GSAQAAEQQQ…KSAKQKQYKN (279 aa)). Residues 36–302 (AEQQQDKGTV…KNEDQTNKSA (267 aa)) constitute a propeptide, removed in mature form. Polar residues predominate over residues 45-54 (VENSTTQSIG). Residues 68-79 (NKNVNEKSNVNS) show a composition bias toward low complexity. 3 stretches are compositionally biased toward basic and acidic residues: residues 84 to 95 (ESLHNETPKNED), 103 to 117 (SQND…EQNK), and 126 to 143 (HSEE…KHAS). Positions 144–172 (ENNQTLHSKAAQSNEDVKTKPSQLDNTAA) are enriched in polar residues. The segment covering 173–183 (KQEDSQKENLS) has biased composition (basic and acidic residues). Residues 184 to 211 (KQDTQSSKTTDLLRATAQNQSKDSQSTE) show a composition bias toward polar residues. The segment covering 240–267 (SKEEPLKVDKQANPTTDKDKSSKNDKGS) has biased composition (basic and acidic residues). Positions 274-289 (LESNAVATTNKQSKQQ) are enriched in polar residues. The active-site Nucleophile is Ser418. Residue Asp609 is the Charge relay system of the active site. Asp647 lines the Ca(2+) pocket. Residue His648 is the Charge relay system of the active site. Residues Asp650, Asp655, and Asp658 each coordinate Ca(2+).

Belongs to the AB hydrolase superfamily. Lipase family.

It is found in the secreted. It carries out the reaction a triacylglycerol + H2O = a diacylglycerol + a fatty acid + H(+). This is Lipase (lip) from Staphylococcus epidermidis.